A 443-amino-acid chain; its full sequence is ATP-dependent protease ATPase subunit HslU (443 aa).

Residues Ile19, 61–66 (GVGKTE), Asp256, Glu321, and Arg393 contribute to the ATP site.

The protein belongs to the ClpX chaperone family. HslU subfamily. In terms of assembly, a double ring-shaped homohexamer of HslV is capped on each side by a ring-shaped HslU homohexamer. The assembly of the HslU/HslV complex is dependent on binding of ATP.

The protein resides in the cytoplasm. Its function is as follows. ATPase subunit of a proteasome-like degradation complex; this subunit has chaperone activity. The binding of ATP and its subsequent hydrolysis by HslU are essential for unfolding of protein substrates subsequently hydrolyzed by HslV. HslU recognizes the N-terminal part of its protein substrates and unfolds these before they are guided to HslV for hydrolysis. This Ralstonia nicotianae (strain ATCC BAA-1114 / GMI1000) (Ralstonia solanacearum) protein is ATP-dependent protease ATPase subunit HslU.